Here is a 311-residue protein sequence, read N- to C-terminus: NAD kinase (311 aa).

The Proton acceptor role is filled by aspartate 67. NAD(+) is bound by residues 67–68 (DG), arginine 72, 140–141 (ND), arginine 151, aspartate 170, 181–186 (TAYSLS), and glutamine 240. Residues 278–287 (LKEGGSRQDD) are compositionally biased toward basic and acidic residues. Positions 278–311 (LKEGGSRQDDENPAATVNPETDSKYPHSHPGSTG) are disordered.

This sequence belongs to the NAD kinase family. Requires a divalent metal cation as cofactor.

Its subcellular location is the cytoplasm. The catalysed reaction is NAD(+) + ATP = ADP + NADP(+) + H(+). Functionally, involved in the regulation of the intracellular balance of NAD and NADP, and is a key enzyme in the biosynthesis of NADP. Catalyzes specifically the phosphorylation on 2'-hydroxyl of the adenosine moiety of NAD to yield NADP. In Moorella thermoacetica (strain ATCC 39073 / JCM 9320), this protein is NAD kinase.